The primary structure comprises 231 residues: Large ribosomal subunit protein uL1 (231 aa).

The protein belongs to the universal ribosomal protein uL1 family. Part of the 50S ribosomal subunit.

Functionally, binds directly to 23S rRNA. The L1 stalk is quite mobile in the ribosome, and is involved in E site tRNA release. Protein L1 is also a translational repressor protein, it controls the translation of the L11 operon by binding to its mRNA. The polypeptide is Large ribosomal subunit protein uL1 (Agrobacterium fabrum (strain C58 / ATCC 33970) (Agrobacterium tumefaciens (strain C58))).